The following is a 180-amino-acid chain: Superoxide dismutase [Cu-Zn] (180 aa).

An N-terminal signal peptide occupies residues 1–19 (MFMNLLSQVSNAIFPQVEA). The Cu cation site is built by His-68, His-70, and His-85. Cys-79 and Cys-171 are joined by a disulfide. Residues His-85, His-93, His-102, and Asp-105 each contribute to the Zn(2+) site. His-142 contacts Cu cation.

Belongs to the Cu-Zn superoxide dismutase family. As to quaternary structure, homodimer. The cofactor is Cu cation. Zn(2+) is required as a cofactor.

Its subcellular location is the cytoplasm. It catalyses the reaction 2 superoxide + 2 H(+) = H2O2 + O2. Its function is as follows. Destroys radicals which are normally produced within the cells and which are toxic to biological systems. Required for normal brood size. May be involved in regulating mpk-1 phosphorylation downstream of phosphatase ptp-2 during oocyte maturation. The chain is Superoxide dismutase [Cu-Zn] from Caenorhabditis briggsae.